A 182-amino-acid polypeptide reads, in one-letter code: A-type ATP synthase subunit E (182 aa).

This sequence belongs to the V-ATPase E subunit family. Has multiple subunits with at least A(3), B(3), C, D, E, F, H, I and proteolipid K(x).

It is found in the cell membrane. Its function is as follows. Component of the A-type ATP synthase that produces ATP from ADP in the presence of a proton gradient across the membrane. The sequence is that of A-type ATP synthase subunit E from Methanothrix thermoacetophila (strain DSM 6194 / JCM 14653 / NBRC 101360 / PT) (Methanosaeta thermophila).